The sequence spans 482 residues: Coagulation factor X (482 aa).

The N-terminal stretch at 1 to 20 (MESPVRLSLLYVVLASLLLP) is a signal peptide. A propeptide spanning residues 21 to 40 (GRSVFINRERANNVLQRIRR) is cleaved from the precursor. The 45-residue stretch at 41–85 (ANSFFEEIKKGNLERECVEEICSFEEAREVFEDNEKTTEFWNKYE) folds into the Gla domain. Glu46, Glu47, Glu54, Glu56, Glu59, Glu60, Glu65, Glu66, Glu69, Glu72, Glu75, and Glu79 each carry 4-carboxyglutamate. An intrachain disulfide couples Cys57 to Cys62. Residues 86 to 122 (DGDQCESSPCQNQGECRDGLGSYTCTCTEGFEGKNCE) form the EGF-like 1; calcium-binding domain. 11 disulfides stabilise this stretch: Cys90–Cys101, Cys95–Cys110, Cys112–Cys121, Cys129–Cys140, Cys136–Cys149, Cys151–Cys164, Cys172–Cys340, Cys238–Cys243, Cys259–Cys275, Cys388–Cys402, and Cys413–Cys441. Residue Asp103 is modified to (3R)-3-hydroxyaspartate. Residues 125-165 (VRKLCSLDNGDCDQFCREEQNSVVCSCAKGYFLGNDGKSCL) enclose the EGF-like 2 domain. The propeptide at 184–231 (VALNTSNSEPDPEDLMPDADILYPTESPSELLNLNKTEPEANSDDVIR) is activation peptide. Residues Asn187 and Asn218 are each glycosylated (N-linked (GlcNAc...) asparagine). Positions 232 to 465 (IVGGQECKRG…FLKWIDRSMK (234 aa)) constitute a Peptidase S1 domain. Catalysis depends on charge relay system residues His274 and Asp320. Ser417 serves as the catalytic Charge relay system.

It belongs to the peptidase S1 family. The two chains are formed from a single-chain precursor by the excision of two Arg residues and are held together by 1 or more disulfide bonds. Forms a heterodimer with SERPINA5. Interacts with ixolaris, an anticoagulant protein from Ixodes scapularis saliva. In terms of processing, the vitamin K-dependent, enzymatic carboxylation of some glutamate residues allows the modified protein to bind calcium. N- and O-glycosylated. Post-translationally, proteolytically cleaved and activated by cathepsin CTSG. The activation peptide is cleaved by factor IXa (in the intrinsic pathway), or by factor VIIa (in the extrinsic pathway). In terms of processing, the iron and 2-oxoglutarate dependent 3-hydroxylation of aspartate and asparagine is (R) stereospecific within EGF domains. In terms of tissue distribution, plasma; synthesized in the liver.

The protein resides in the secreted. It catalyses the reaction Selective cleavage of Arg-|-Thr and then Arg-|-Ile bonds in prothrombin to form thrombin.. With respect to regulation, inhibited by SERPINA5. Functionally, factor Xa is a vitamin K-dependent glycoprotein that converts prothrombin to thrombin in the presence of factor Va, calcium and phospholipid during blood clotting. Factor Xa activates pro-inflammatory signaling pathways in a protease-activated receptor (PAR)-dependent manner. This chain is Coagulation factor X (F10), found in Rattus norvegicus (Rat).